The primary structure comprises 298 residues: Glycine--tRNA ligase alpha subunit (298 aa).

This sequence belongs to the class-II aminoacyl-tRNA synthetase family. As to quaternary structure, tetramer of two alpha and two beta subunits.

It is found in the cytoplasm. It carries out the reaction tRNA(Gly) + glycine + ATP = glycyl-tRNA(Gly) + AMP + diphosphate. The sequence is that of Glycine--tRNA ligase alpha subunit from Neisseria meningitidis serogroup C / serotype 2a (strain ATCC 700532 / DSM 15464 / FAM18).